The following is a 664-amino-acid chain: MESFMESLNRLKEIHEKEVLGLQNKLLELNSERCRDAQRIEELFSKNHQLREQQKTLKENLRVLENRLRAGLCDRCMVTQELARKRQQEFESSHLQNLQRIFILTNEMNGLKEENETLKEEVKRLRGLGDRPKPRAKEGTSDPPSPLLLPSPGGWKAITEKPPGGHEEAEEDHQGVGLRGEEKPAGHRTSPVAKISPGATLPESRAPDMSPQRISNQLHGTIAVVRPGSQACPADRGPANGTPPPLPARSSPPSPAYERGLSLDSFLRASRPSAMTHEAPKLSPKVDRLCLLNRPLSLHLQSPHSSPLAPAAAPSDPRLQDLKAREAEAWEEPTELLGLPSALAGMQDLRLEGALHLLLAQQQLRARARAGSVRPRGQPTPGEMLPSLPVGSDSEGPENEGTRAALAAAGLSGGRHTQPAGPGRAQRTEAAATQDCALDKPLDLSEWGRARGQDTPKPAGQHGSLSPAAAHTASPEPPTQSGPLTRSPQALSNGTKGTRVPEQEEASTPMDPSRPLPGSQLSLSSPGSTEDEDTGRPLPPPHPQPPPHPQPPDLDGHPEPSKAEVLRPESDELDETDTPGSEVGLSSQAEATTSTTGEGPECICTQEHGQGPPRKRKRASEPGDKASKKPSRGRRKLTATEGPGSPRDAEDHSPSPNSSPWEET.

A compositionally biased stretch (basic and acidic residues) spans 125–140; that stretch reads LRGLGDRPKPRAKEGT. Disordered stretches follow at residues 125-284 and 369-664; these read LRGL…KLSP and RAGS…WEET. Residues 241–255 are compositionally biased toward pro residues; that stretch reads GTPPPLPARSSPPSP. The segment covering 437–454 has biased composition (basic and acidic residues); it reads ALDKPLDLSEWGRARGQD. Over residues 481 to 496 the composition is skewed to polar residues; the sequence is SGPLTRSPQALSNGTK. Positions 516–528 are enriched in low complexity; that stretch reads LPGSQLSLSSPGS. Over residues 537–552 the composition is skewed to pro residues; that stretch reads PLPPPHPQPPPHPQPP. Residues 554 to 570 show a composition bias toward basic and acidic residues; sequence LDGHPEPSKAEVLRPES. Over residues 584 to 597 the composition is skewed to polar residues; the sequence is GLSSQAEATTSTTG. Residues 628–637 show a composition bias toward basic residues; sequence KKPSRGRRKL. Residues 654–664 show a composition bias toward polar residues; the sequence is PSPNSSPWEET.

This chain is RBBP8 N-terminal-like protein (RBBP8NL), found in Homo sapiens (Human).